The sequence spans 222 residues: UPF0502 protein Shewmr7_1629 (222 aa).

It belongs to the UPF0502 family.

The sequence is that of UPF0502 protein Shewmr7_1629 from Shewanella sp. (strain MR-7).